The sequence spans 312 residues: Homoserine O-acetyltransferase (312 aa).

Residue cysteine 142 is the Acyl-thioester intermediate of the active site. The substrate site is built by lysine 163 and serine 192. Residue histidine 235 is the Proton acceptor of the active site. Residue glutamate 237 is part of the active site. A substrate-binding site is contributed by arginine 249.

Belongs to the MetA family.

The protein resides in the cytoplasm. It carries out the reaction L-homoserine + acetyl-CoA = O-acetyl-L-homoserine + CoA. It participates in amino-acid biosynthesis; L-methionine biosynthesis via de novo pathway; O-acetyl-L-homoserine from L-homoserine: step 1/1. In terms of biological role, transfers an acetyl group from acetyl-CoA to L-homoserine, forming acetyl-L-homoserine. This is Homoserine O-acetyltransferase from Ruegeria pomeroyi (strain ATCC 700808 / DSM 15171 / DSS-3) (Silicibacter pomeroyi).